The sequence spans 147 residues: Small ribosomal subunit protein uS5 (147 aa).

The S5 DRBM domain maps to 9–72 (FEEVIVDIGR…DDAFKNIVEV (64 aa)).

The protein belongs to the universal ribosomal protein uS5 family. Part of the 30S ribosomal subunit. Contacts proteins S4 and S8.

In terms of biological role, with S4 and S12 plays an important role in translational accuracy. Located at the back of the 30S subunit body where it stabilizes the conformation of the head with respect to the body. This chain is Small ribosomal subunit protein uS5, found in Campylobacter jejuni subsp. jejuni serotype O:6 (strain 81116 / NCTC 11828).